We begin with the raw amino-acid sequence, 718 residues long: MFNVESVERVELCESLLTWIQTFNVDAPCQTAEDLTNGVVMSQVLQKIDPVYFDDNWLNRIKTEVGDNWRLKISNLKKILKGILDYNHEILGQQINDFTLPDVNLIGEHSDAAELGRMLQLILGCAVNCEQKQEYIQAIMMMEESVQHVVMTAIQELMSKESPVSAGHDAYVDLDRQLKKTTEELNEALSAKEEIAQRCHELDMQVAALQEEKSSLLAENQILMERLNQSDSIEDPNSPAGRRHLQLQTQLEQLQEETFRLEAAKDDYRIRCEELEKEISELRQQNDELTTLADEAQSLKDEIDVLRHSSDKVSKLEGQVESYKKKLEDLGDLRRQVKLLEEKNTMYMQNTVSLEEELRKANAARGQLETYKRQVVELQNRLSDESKKADKLDFEYKRLKEKVDGLQKEKDRLRTERDSLKETIEELRCVQAQEGQLTTQGLMPLGSQESSDSLAAEIVTPEIREKLIRLQHENKMLKLNQEDSDNEKIALLQSLLDDANLRKNELETENRLVNQRLLEVQSQVEELQKSLQDQGSKAEDSVLLKKKLEEHLEKLHEANNELQKKRAIIEDLEPRFNNSSLRIEELQEALRKKEEEMKQMEERYKKYLEKAKSVIRTLDPKQNQGAAPEIQALKNQLQERDRLFHSLEKEYEKTKSQRDMEEKYIVSAWYNMGMTLHKKAAEDRLASTGSGQSFLARQRQATSTRRSYPGHVQPATAR.

N-acetylmethionine is present on Met1. The interval 1 to 164 (MFNVESVERV…QELMSKESPV (164 aa)) is sufficient for interaction with microtubules. Phosphoserine is present on Ser6. The Calponin-homology (CH) domain occupies 10 to 126 (VELCESLLTW…RMLQLILGCA (117 aa)). 2 coiled-coil regions span residues 168 to 433 (HDAY…VQAQ) and 462 to 663 (EIRE…MEEK). Residue Ser238 is modified to Phosphoserine. The segment at 450 to 671 (SSDSLAAEIV…EKYIVSAWYN (222 aa)) is sufficient for interaction with IIGP1. The required for association with Golgi stretch occupies residues 553–718 (EKLHEANNEL…PGHVQPATAR (166 aa)). A disordered region spans residues 682 to 718 (EDRLASTGSGQSFLARQRQATSTRRSYPGHVQPATAR). The span at 687–706 (STGSGQSFLARQRQATSTRR) shows a compositional bias: polar residues. Phosphoserine occurs at positions 693 and 707.

The protein belongs to the hook family. In terms of assembly, self-associates. Component of the FTS/Hook/FHIP complex (FHF complex), composed of AKTIP/FTS, FHIP1B, and one or more members of the Hook family of proteins HOOK1, HOOK2, and HOOK3. May interact directly with AKTIP/FTS, HOOK1 and HOOK2. Associates with several subunits of the homotypic vesicular sorting complex (the HOPS complex) including VPS16 and VPS41; these interactions may be indirect. Interacts with IIGP1. Interacts with MSR1, and this association is stimulated by ligand binding to MSR1. Interacts with microtubules. Part of a tripartite complex with dynein and dynactin, acts an adapter linking the dynein motor complex and dynactin. Interacts with dynein intermediate chain and dynactin (DCTN1). Interacts with CCDC181. Interacts with LRGUK. As to quaternary structure, (Microbial infection) Interacts with Salmonella typhimurium spiC. Expressed in brain, cerebellum, heart, intestine, kidney, liver, lung, skeletal muscle, spleen and stomach (at protein level).

The protein localises to the cytoplasm. It is found in the cytoskeleton. The protein resides in the golgi apparatus. Acts as an adapter protein linking the dynein motor complex to various cargos and converts dynein from a non-processive to a highly processive motor in the presence of dynactin. Facilitates the interaction between dynein and dynactin and activates dynein processivity (the ability to move along a microtubule for a long distance without falling off the track). Predominantly recruits 2 dyneins, which increases both the force and speed of the microtubule motor. Component of the FTS/Hook/FHIP complex (FHF complex). The FHF complex may function to promote vesicle trafficking and/or fusion via the homotypic vesicular protein sorting complex (the HOPS complex). May regulate clearance of endocytosed receptors such as MSR1. Participates in defining the architecture and localization of the Golgi complex. FHF complex promotes the distribution of AP-4 complex to the perinuclear area of the cell. Functionally, (Microbial infection) Serves as a target for the spiC protein from Salmonella typhimurium, which inactivates it, leading to a strong alteration in cellular trafficking. The chain is Protein Hook homolog 3 (Hook3) from Mus musculus (Mouse).